Here is a 539-residue protein sequence, read N- to C-terminus: uncharacterized protein (539 aa).

2 consecutive ABC transporter domains span residues 8 to 265 (VRIT…SRAL) and 307 to 537 (IELD…IGDM). 339–346 (GDNGSGKS) contacts ATP.

It belongs to the ABC transporter superfamily.

The protein resides in the mitochondrion. This is an uncharacterized protein from Saccharomyces cerevisiae (strain ATCC 204508 / S288c) (Baker's yeast).